We begin with the raw amino-acid sequence, 105 residues long: MESSEVLQEIREVNLAYLLLAQRLVRENQVEAMFRLGVSKEIADILAKLTSAQLVKLAASNMVLCRFRFDDHALLSTLTHTAKSHDMQQIHAAILLARQPVESLN.

The protein belongs to the FlhD family. As to quaternary structure, homodimer; disulfide-linked. Forms a heterohexamer composed of two FlhC and four FlhD subunits. Each FlhC binds a FlhD dimer, forming a heterotrimer, and a hexamer assembles by dimerization of two heterotrimers.

The protein resides in the cytoplasm. Its function is as follows. Functions in complex with FlhC as a master transcriptional regulator that regulates transcription of several flagellar and non-flagellar operons by binding to their promoter region. Activates expression of class 2 flagellar genes, including fliA, which is a flagellum-specific sigma factor that turns on the class 3 genes. Also regulates genes whose products function in a variety of physiological pathways. The polypeptide is Flagellar transcriptional regulator FlhD (Cupriavidus necator (strain ATCC 17699 / DSM 428 / KCTC 22496 / NCIMB 10442 / H16 / Stanier 337) (Ralstonia eutropha)).